Reading from the N-terminus, the 359-residue chain is MMP endo-(1,4)-3-O-methyl-alpha-D-mannosidase (359 aa).

Monomer in solution.

The catalysed reaction is Endohydrolysis of 3-O-methyl-alpha-D-mannosyl-(1-&gt;4)-3-O-methyl-D-mannose linkages within (1,4)-3-O-methyl-alpha-D-mannnan substrates.. In terms of biological role, hydrolase involved in the biosynthesis of 3-O-methylmannose polysaccharides (MMP), which are intracellular polymethylated polysaccharides implicated in the modulation of fatty acid metabolism in non-tuberculous mycobacteria. Highly specific hydrolase that catalyzes the internal cleavage of MMP. Is able to hydrolyze purified MMP into distinct lower order oligomannosides but does not cleave acylated or deacylated forms of 6-O-methylglucose lipopolysaccharide (MGLP), beta-mannans, synthetic 4alpha-oligomannosides or its own reaction products. Products were identified as four distinct oligomannosides differing in the number of mannose units (4 to 8) and methylation pattern (free or methylated C1-OH). Might serve as a recycling enzyme that hydrolyzes mature MMP into defined-size smaller oligomannosides that are, in turn, substrates for ManT and MeT1 activities for further processing into new daughter MMP chains. This is MMP endo-(1,4)-3-O-methyl-alpha-D-mannosidase from Mycolicibacterium hassiacum (strain DSM 44199 / CIP 105218 / JCM 12690 / 3849) (Mycobacterium hassiacum).